The primary structure comprises 483 residues: Acyl-coenzyme A thioesterase 2, mitochondrial (483 aa).

Residue Lys-104 is modified to N6-acetyllysine. Residues Ser-294, Asp-388, and His-422 each act as charge relay system in the active site. The residue at position 470 (Lys-470) is an N6-succinyllysine. The Microbody targeting signal motif lies at 481–483 (SKV).

This sequence belongs to the C/M/P thioester hydrolase family. Monomer. As to expression, strongest expression in heart, liver, muscle and kidney. Weak in placenta and pancreas.

The protein localises to the mitochondrion. The enzyme catalyses hexadecanoyl-CoA + H2O = hexadecanoate + CoA + H(+). It carries out the reaction tetradecanoyl-CoA + H2O = tetradecanoate + CoA + H(+). It catalyses the reaction octadecanoyl-CoA + H2O = octadecanoate + CoA + H(+). The catalysed reaction is eicosanoyl-CoA + H2O = eicosanoate + CoA + H(+). The enzyme catalyses decanoyl-CoA + H2O = decanoate + CoA + H(+). It carries out the reaction dodecanoyl-CoA + H2O = dodecanoate + CoA + H(+). It catalyses the reaction (9Z)-octadecenoyl-CoA + H2O = (9Z)-octadecenoate + CoA + H(+). The catalysed reaction is (9Z)-hexadecenoyl-CoA + H2O = (9Z)-hexadecenoate + CoA + H(+). The enzyme catalyses (9E)-octadecenoyl-CoA + H2O = (9E)-octadecenoate + CoA + H(+). It carries out the reaction (9Z,12Z)-octadecadienoyl-CoA + H2O = (9Z,12Z)-octadecadienoate + CoA + H(+). It participates in lipid metabolism; fatty acid metabolism. Its function is as follows. Catalyzes the hydrolysis of acyl-CoAs into free fatty acids and coenzyme A (CoASH), regulating their respective intracellular levels. Displays higher activity toward long chain acyl CoAs (C14-C20). The enzyme is involved in enhancing the hepatic fatty acid oxidation in mitochondria. The protein is Acyl-coenzyme A thioesterase 2, mitochondrial (ACOT2) of Homo sapiens (Human).